A 196-amino-acid polypeptide reads, in one-letter code: Vascular-related unknown protein 2 (196 aa).

The segment at 84-130 (ANNINTNPKKRRIIHQHKEEEEEELQKGEEEEEDEEDTASSPSNKTK) is disordered. The segment covering 103–121 (EEEEELQKGEEEEEDEEDT) has biased composition (acidic residues).

Functionally, involved in the regulation of plant growth. The polypeptide is Vascular-related unknown protein 2 (Arabidopsis thaliana (Mouse-ear cress)).